The sequence spans 670 residues: Major fimbrium tip subunit FimD (670 aa).

The first 24 residues, 1–24 (MRTNRILNIICPPILFLLVGFLFG), serve as a signal peptide directing secretion. A lipid anchor (N-palmitoyl cysteine) is attached at C25. The S-diacylglycerol cysteine moiety is linked to residue C25. Positions 25 to 50 (CVREDIESDMNETSSLFLQVQPYNQR) are excised as a propeptide.

The protein belongs to the FimD family. As to quaternary structure, fimbriae are composed of a major, structural subunit and the minor components FimC, FimD and FimE. Identified in a complex composed of FimC, FimD and FimE (in vitro). The complex interacts with host extracellular matrix proteins, including fibronectin and type I collagen. Interacts with host CXCR4.

It localises to the fimbrium. The protein resides in the cell outer membrane. Its function is as follows. Probably a component of the fimbrium tip. These long, filamentous pili are attached to the cell surface; they mediate biofilm formation, adhesion onto host cells and onto other bacteria that are part of the oral microbiome. They play an important role in invasion of periodontal tissues and are major virulence factors. FimC, FimD and FimE contribute to interaction with host CXCR4 and thereby down-regulate the TLR2-mediated host immune response. This chain is Major fimbrium tip subunit FimD, found in Porphyromonas gingivalis (strain ATCC 33277 / DSM 20709 / CIP 103683 / JCM 12257 / NCTC 11834 / 2561).